A 284-amino-acid polypeptide reads, in one-letter code: Putative L-ribulose-5-phosphate 3-epimerase UlaE (284 aa).

It belongs to the L-ribulose-5-phosphate 3-epimerase family.

The catalysed reaction is L-ribulose 5-phosphate = L-xylulose 5-phosphate. Its pathway is cofactor degradation; L-ascorbate degradation; D-xylulose 5-phosphate from L-ascorbate: step 3/4. Its function is as follows. Catalyzes the isomerization of L-xylulose-5-phosphate to L-ribulose-5-phosphate. Is involved in the anaerobic L-ascorbate utilization. The polypeptide is Putative L-ribulose-5-phosphate 3-epimerase UlaE (Shigella dysenteriae serotype 1 (strain Sd197)).